A 593-amino-acid chain; its full sequence is Tectonic-1 (593 aa).

A signal peptide spans 1-22 (MGSRGLPPLLLVLLNCYTSSST). Residues 37-72 (KEDLNSTKATPTTLQPSLSPRTPGTPRAPERSGPRP) are disordered. Residue Asn-41 is glycosylated (N-linked (GlcNAc...) asparagine). The segment covering 42 to 58 (STKATPTTLQPSLSPRT) has biased composition (polar residues). A glycan (N-linked (GlcNAc...) asparagine) is linked at Asn-303. Residue Arg-486 is modified to Omega-N-methylarginine. A glycan (N-linked (GlcNAc...) asparagine) is linked at Asn-536.

This sequence belongs to the tectonic family. Part of the tectonic-like complex (also named B9 complex).

The protein resides in the cytoplasm. It localises to the cytoskeleton. It is found in the cilium basal body. The protein localises to the secreted. In terms of biological role, component of the tectonic-like complex, a complex localized at the transition zone of primary cilia and acting as a barrier that prevents diffusion of transmembrane proteins between the cilia and plasma membranes. Regulator of Hedgehog (Hh), required for both activation and inhibition of the Hh pathway in the patterning of the neural tube. During neural tube development, it is required for formation of the most ventral cell types and for full Hh pathway activation. Functions in Hh signal transduction to fully activate the pathway in the presence of high Hh levels and to repress the pathway in the absence of Hh signals. Modulates Hh signal transduction downstream of SMO and RAB23. This Mus musculus (Mouse) protein is Tectonic-1 (Tctn1).